We begin with the raw amino-acid sequence, 150 residues long: Urease accessory protein UreE (150 aa).

This sequence belongs to the UreE family.

It localises to the cytoplasm. Its function is as follows. Involved in urease metallocenter assembly. Binds nickel. Probably functions as a nickel donor during metallocenter assembly. The chain is Urease accessory protein UreE from Staphylococcus aureus (strain MRSA252).